A 298-amino-acid polypeptide reads, in one-letter code: MTATIIDGKIIATELRARVAVEVARLKKDHSLTPGLAVVLVGNDPASEVYVRNKGIATTEAGMNSFEFKLPAETSEADVLAKVRELNADPAVHGFLVQFPVPNHISQQAVIDAIDPVKDADGLHPLNAGRLASGLPAMVPATPEGCVIMAKRAGGDLSGKHAVIIGRSNLVGKPVAQLLLKENCTVTIAHSRSRDLPSIARQADILVAAVGRPGMVRGDWVKPGAVVIDVGINRVPAPEKGEGKTRLVGDVLFDEAAEVAGAITPVPGGVGLMTVACLLRNTVIAACRQNGIALPQDF.

NADP(+)-binding positions include 166-168 (GRS), serine 191, and isoleucine 232.

This sequence belongs to the tetrahydrofolate dehydrogenase/cyclohydrolase family. As to quaternary structure, homodimer.

It catalyses the reaction (6R)-5,10-methylene-5,6,7,8-tetrahydrofolate + NADP(+) = (6R)-5,10-methenyltetrahydrofolate + NADPH. It carries out the reaction (6R)-5,10-methenyltetrahydrofolate + H2O = (6R)-10-formyltetrahydrofolate + H(+). The protein operates within one-carbon metabolism; tetrahydrofolate interconversion. Its function is as follows. Catalyzes the oxidation of 5,10-methylenetetrahydrofolate to 5,10-methenyltetrahydrofolate and then the hydrolysis of 5,10-methenyltetrahydrofolate to 10-formyltetrahydrofolate. The protein is Bifunctional protein FolD of Parvibaculum lavamentivorans (strain DS-1 / DSM 13023 / NCIMB 13966).